Here is a 729-residue protein sequence, read N- to C-terminus: Pentatricopeptide repeat-containing protein At5g01110 (729 aa).

The interval 26–45 (TSSSPVFEPSSSSSSSSSSA) is disordered. Positions 27–45 (SSSPVFEPSSSSSSSSSSA) are enriched in low complexity. PPR repeat units follow at residues 112-147 (TSLSLSAMIHILVRSGRLSDAQSCLLRMIRRSGVSR), 164-198 (NDSVFDLLIRTYVQARKLREAHEAFTLLRSKGFTV), 199-233 (SIDACNALIGSLVRIGWVELAWGVYQEISRSGVGI), 234-268 (NVYTLNIMVNALCKDGKMEKVGTFLSQVQEKGVYP), 269-303 (DIVTYNTLISAYSSKGLMEEAFELMNAMPGKGFSP), 304-338 (GVYTYNTVINGLCKHGKYERAKEVFAEMLRSGLSP), 339-373 (DSTTYRSLLMEACKKGDVVETEKVFSDMRSRDVVP), 374-408 (DLVCFSSMMSLFTRSGNLDKALMYFNSVKEAGLIP), 409-443 (DNVIYTILIQGYCRKGMISVAMNLRNEMLQQGCAM), 444-478 (DVVTYNTILHGLCKRKMLGEADKLFNEMTERALFP), 479-513 (DSYTLTILIDGHCKLGNLQNAMELFQKMKEKRIRL), 514-548 (DVVTYNTLLDGFGKVGDIDTAKEIWADMVSKEILP), 549-583 (TPISYSILVNALCSKGHLAEAFRVWDEMISKNIKP), 584-618 (TVMICNSMIKGYCRSGNASDGESFLEKMISEGFVP), 619-649 (DCISYNTLIYGFVREENMSKAFGLVKKMEEE), 656-690 (DVFTYNSILHGFCRQNQMKEAEVVLRKMIERGVNP), and 691-725 (DRSTYTCMINGFVSQDNLTEAFRIHDEMLQRGFSP).

It belongs to the PPR family. P subfamily.

The chain is Pentatricopeptide repeat-containing protein At5g01110 from Arabidopsis thaliana (Mouse-ear cress).